The following is a 349-amino-acid chain: GTPase Obg (349 aa).

The 159-residue stretch at 1 to 159 (MKFLDQAKVY…LWIWLRLKLI (159 aa)) folds into the Obg domain. In terms of domain architecture, OBG-type G spans 160 to 327 (ADAGLIGLPN…VLRALMRVVQ (168 aa)). GTP is bound by residues 166-173 (GLPNAGKS), 191-195 (FTTLH), 212-215 (DIPG), 279-282 (SQID), and 308-310 (SSA). Mg(2+)-binding residues include serine 173 and threonine 193.

The protein belongs to the TRAFAC class OBG-HflX-like GTPase superfamily. OBG GTPase family. In terms of assembly, monomer. Requires Mg(2+) as cofactor.

Its subcellular location is the cytoplasm. Functionally, an essential GTPase which binds GTP, GDP and possibly (p)ppGpp with moderate affinity, with high nucleotide exchange rates and a fairly low GTP hydrolysis rate. Plays a role in control of the cell cycle, stress response, ribosome biogenesis and in those bacteria that undergo differentiation, in morphogenesis control. The sequence is that of GTPase Obg from Chelativorans sp. (strain BNC1).